The primary structure comprises 175 residues: Diacylglycerol kinase (175 aa).

Helical transmembrane passes span 55 to 75 (VAPN…YAFA) and 96 to 116 (LLHL…LVMI). The Proton acceptor role is filled by Glu118. Glu125 contributes to the a divalent metal cation binding site. A helical transmembrane segment spans residues 151–171 (VLLAAIAAVIVGGCLLLPPLL).

This sequence belongs to the bacterial diacylglycerol kinase family. The cofactor is Mg(2+).

It localises to the cell membrane. The catalysed reaction is a 1,2-diacyl-sn-glycerol + ATP = a 1,2-diacyl-sn-glycero-3-phosphate + ADP + H(+). Catalyzes the ATP-dependent phosphorylation of sn-l,2-diacylglycerol (DAG) to phosphatidic acid. This is Diacylglycerol kinase (dgkA) from Synechocystis sp. (strain ATCC 27184 / PCC 6803 / Kazusa).